The chain runs to 493 residues: Sodium-coupled neutral amino acid symporter 2 (493 aa).

The Cytoplasmic portion of the chain corresponds to 1–72 (MNNAEVLNVA…LPGTTSFGMS (72 aa)). The regulates protein turnover upon amino acid deprivation stretch occupies residues 1–92 (MNNAEVLNVA…SGILGLSYAM (92 aa)). The chain crosses the membrane as a helical span at residues 73–92 (VFNLSNAIVGSGILGLSYAM). Asn-78 contacts Na(+). The Extracellular portion of the chain corresponds to 93 to 98 (ANTGIA). Residues 99 to 119 (LFMILLVFVTVFSLYSIHLLL) form a helical membrane-spanning segment. Over 120 to 154 (KTANEGGSLLYEQLGLKAFGIPGKLAASGSVTLQN) the chain is Cytoplasmic. Residues 155-173 (IGAMSSYLYIVKYELPLVI) traverse the membrane as a helical segment. Topologically, residues 174–184 (KALMDIKESNG) are extracellular. Residues 185–205 (EWYLNGDYLVIMVSLAIILPL) form a helical membrane-spanning segment. The Cytoplasmic portion of the chain corresponds to 206–213 (SLLRNLGY). A helical transmembrane segment spans residues 214-234 (LGYTSGFSPLCMVFFLIVVIY). Over 235–279 (KKFEIPCPLEAMNMTSNSSSHDHMAHNETDDEMCKPKYFVFNSQT) the chain is Extracellular. Cys-241 and Cys-268 are oxidised to a cystine. N-linked (GlcNAc...) asparagine glycosylation is found at Asn-247, Asn-251, and Asn-261. Residues 280–300 (VYAVPILTFSFVCHPAVLPIY) traverse the membrane as a helical segment. Over 301–316 (QELKGRSRRRMMNVSN) the chain is Cytoplasmic. A helical transmembrane segment spans residues 317 to 337 (VSFFAMFIMYLLAALFGYLTF). Topologically, residues 338–358 (YSKVEPELLHTYSKVFGAGVI) are extracellular. The helical transmembrane segment at 359 to 379 (FVVVRLAVLMAVTLTVPIVIF) threads the bilayer. Thr-373 lines the Na(+) pocket. The Cytoplasmic segment spans residues 380-400 (PIRSSLNELFCSGKDFAWIRH). Residues 401-421 (ILITFLILAFTNVLVIFVPTI) form a helical membrane-spanning segment. Topologically, residues 422-423 (RD) are extracellular. The chain crosses the membrane as a helical span at residues 424 to 444 (IFGFIGASAAAMLVFILPSAF). Residues 445–459 (YIRLVKKESMKSVQK) lie on the Cytoplasmic side of the membrane. A helical membrane pass occupies residues 460–482 (IGALLFLIGGIIVMIGSMTLIIL). Residues 483–493 (DWIHNSTSGGN) are Extracellular-facing.

It belongs to the amino acid/polyamine transporter 2 family.

The protein localises to the cell membrane. It carries out the reaction L-alanine(in) + Na(+)(in) = L-alanine(out) + Na(+)(out). It catalyses the reaction glycine(in) + Na(+)(in) = glycine(out) + Na(+)(out). The enzyme catalyses L-serine(in) + Na(+)(in) = L-serine(out) + Na(+)(out). The catalysed reaction is L-proline(in) + Na(+)(in) = L-proline(out) + Na(+)(out). It carries out the reaction L-methionine(in) + Na(+)(in) = L-methionine(out) + Na(+)(out). It catalyses the reaction L-histidine(in) + Na(+)(in) = L-histidine(out) + Na(+)(out). The enzyme catalyses L-asparagine(in) + Na(+)(in) = L-asparagine(out) + Na(+)(out). The catalysed reaction is L-glutamine(in) + Na(+)(in) = L-glutamine(out) + Na(+)(out). It carries out the reaction L-threonine(in) + Na(+)(in) = L-threonine(out) + Na(+)(out). It catalyses the reaction L-leucine(in) + Na(+)(in) = L-leucine(out) + Na(+)(out). The enzyme catalyses L-phenylalanine(in) + Na(+)(in) = L-phenylalanine(out) + Na(+)(out). Its activity is regulated as follows. Inhibited by N-methyl-D-glucamine. Inhibited by choline. Allosteric regulation of sodium ions binding by pH. Functionally, symporter that cotransports neutral amino acids and sodium ions from the extracellular to the intracellular side of the cell membrane. The transport is pH-sensitive, Li(+)-intolerant, electrogenic, driven by the Na(+) electrochemical gradient and cotransports of neutral amino acids and sodium ions with a stoichiometry of 1:1. The protein is Sodium-coupled neutral amino acid symporter 2 of Xenopus tropicalis (Western clawed frog).